The primary structure comprises 376 residues: 1-deoxy-D-xylulose 5-phosphate reductoisomerase (376 aa).

Threonine 12, glycine 13, serine 14, isoleucine 15, arginine 39, glutamine 40, and asparagine 110 together coordinate NADPH. Lysine 111 is a binding site for 1-deoxy-D-xylulose 5-phosphate. Glutamate 112 is a binding site for NADPH. Aspartate 136 serves as a coordination point for Mn(2+). 1-deoxy-D-xylulose 5-phosphate contacts are provided by serine 137, glutamate 138, serine 162, and histidine 185. Glutamate 138 is a binding site for Mn(2+). NADPH is bound at residue glycine 191. Residues serine 198, asparagine 203, lysine 204, and glutamate 207 each coordinate 1-deoxy-D-xylulose 5-phosphate. Glutamate 207 is a Mn(2+) binding site.

This sequence belongs to the DXR family. Mg(2+) is required as a cofactor. Requires Mn(2+) as cofactor.

It carries out the reaction 2-C-methyl-D-erythritol 4-phosphate + NADP(+) = 1-deoxy-D-xylulose 5-phosphate + NADPH + H(+). It functions in the pathway isoprenoid biosynthesis; isopentenyl diphosphate biosynthesis via DXP pathway; isopentenyl diphosphate from 1-deoxy-D-xylulose 5-phosphate: step 1/6. Functionally, catalyzes the NADPH-dependent rearrangement and reduction of 1-deoxy-D-xylulose-5-phosphate (DXP) to 2-C-methyl-D-erythritol 4-phosphate (MEP). This is 1-deoxy-D-xylulose 5-phosphate reductoisomerase from Treponema pallidum (strain Nichols).